The sequence spans 391 residues: DNA replication and repair protein RecF (391 aa).

Position 30 to 37 (30 to 37) interacts with ATP; it reads GSNGQGKT.

This sequence belongs to the RecF family.

It localises to the cytoplasm. Functionally, the RecF protein is involved in DNA metabolism; it is required for DNA replication and normal SOS inducibility. RecF binds preferentially to single-stranded, linear DNA. It also seems to bind ATP. This is DNA replication and repair protein RecF from Saccharopolyspora erythraea (strain ATCC 11635 / DSM 40517 / JCM 4748 / NBRC 13426 / NCIMB 8594 / NRRL 2338).